Reading from the N-terminus, the 514-residue chain is Tryptophan decarboxylase 1 (514 aa).

F104 is a binding site for serotonin. Positions 175 and 176 each coordinate pyridoxal 5'-phosphate. A serotonin-binding site is contributed by H214. Residue T273 coordinates pyridoxal 5'-phosphate. Position 330 is an N6-(pyridoxal phosphate)lysine (K330). Y359 acts as the Proton donor in catalysis. Pyridoxal 5'-phosphate-binding residues include V380 and G381.

This sequence belongs to the group II decarboxylase family. In terms of assembly, forms homodimers. Pyridoxal 5'-phosphate is required as a cofactor.

The catalysed reaction is L-tryptophan + H(+) = tryptamine + CO2. It catalyses the reaction 5-hydroxy-L-tryptophan + H(+) = serotonin + CO2. Involved in serotonin biosynthesis. Catalyzes the decarboxylation of L-tryptophan to produce tryptamine, which is converted to serotonin by tryptamine 5-hydroxylase. May play a major role in serotonin biosynthesis during senescence. Accumulation of serotonin attenuates leaf senescence. Catalyzes the decarboxylation of 5-hydroxy-L-tryptophan to produce serotonin. In Oryza sativa subsp. japonica (Rice), this protein is Tryptophan decarboxylase 1.